The following is a 316-amino-acid chain: MST50-interacting protein 11 (316 aa).

7 WD repeats span residues 13-53 (GHNG…TSYG), 61-100 (GHSH…TTRR), 103-142 (GHTN…KYTI), 146-187 (GHSE…LQTD), 190-229 (GHTG…HLYS), 231-269 (NAND…KVDE), and 281-316 (SREP…MSRA).

This sequence belongs to the WD repeat G protein beta family. Ribosomal protein RACK1 subfamily. Interacts with MST50 and MCK1.

In terms of biological role, involved in regulating the cell wall integrity and MPS1 activation via its interaction with the MAPKKK MCK1. This chain is MST50-interacting protein 11, found in Pyricularia oryzae (strain 70-15 / ATCC MYA-4617 / FGSC 8958) (Rice blast fungus).